The chain runs to 331 residues: High-affinity nickel-transport protein NixA (331 aa).

At 1-5 (MKLWF) the chain is on the cytoplasmic side. A helical transmembrane segment spans residues 6 to 26 (PYFLAIVFLHALGLALLFMAN). Topologically, residues 27–33 (NASFYAA) are periplasmic. A helical membrane pass occupies residues 34 to 54 (ASMAYMLGAKHAFDADHIACI). The Cytoplasmic segment spans residues 55-66 (DNTIRKLTQQGK). The chain crosses the membrane as a helical span at residues 67 to 87 (NAYGVGFYFSMGHSSVVILMT). Residues 88–113 (IISAFAIAWAKEHTPMLEEIGGVVGT) are Periplasmic-facing. The chain crosses the membrane as a helical span at residues 114 to 135 (LVSGLFLLIIGLLNAIILLDLL). The Cytoplasmic segment spans residues 136–178 (KIFKKSHSNESLSQQQNEEIERLLTSRGLLNRFFKPLFNFVSK). Residues 179–199 (SWHIYPIGFLFGLGFDTASEI) form a helical membrane-spanning segment. The Periplasmic portion of the chain corresponds to 200–225 (ALLALSSSAIKVSMVGMLSLPILFAA). The chain crosses the membrane as a helical span at residues 226–246 (GMSLFDTLDGAFMLKAYDWAF). At 247-252 (KTPLRK) the chain is on the cytoplasmic side. The helical transmembrane segment at 253–273 (IYYNISITALSVFIALFIGLI) threads the bilayer. At 274–302 (ELFQVVSEKLHLKFENRLLRALQSLEFTD) the chain is on the periplasmic side. A helical transmembrane segment spans residues 303–322 (LGYYLVGLFVIAFLGSFFLW). Residues 323–331 (KIKFSKLES) lie on the Cytoplasmic side of the membrane.

It belongs to the NiCoT transporter (TC 2.A.52) family.

It is found in the cell inner membrane. Functionally, high-affinity nickel intake protein. Imports nickel ions in an energy-dependent fashion. Necessary for the expression of catalytically active urease. This is High-affinity nickel-transport protein NixA (nixA) from Helicobacter pylori (strain ATCC 700392 / 26695) (Campylobacter pylori).